The sequence spans 97 residues: Protein CYSTEINE-RICH TRANSMEMBRANE MODULE 7 (97 aa).

Residues Met1–Pro27 are disordered. Residues Gly15–Pro27 are compositionally biased toward pro residues. The helical transmembrane segment at Tyr68–Val88 threads the bilayer.

This sequence belongs to the CYSTM1 family. As to quaternary structure, homodimer and heterodimers. Interacts with CYSTM3, CYSTM4, CYSTM5, CYSTM6, CYSTM10, WIH1/CYSTM13 and CYSTM11. Binds weakly to CYSTM1, CYSTM2 and CYSTM12. Mostly expressed in siliques and, to a lower extent, in stems, roots, leaves and flowers.

The protein localises to the cell membrane. In terms of biological role, involved in resistance to abiotic stress. The sequence is that of Protein CYSTEINE-RICH TRANSMEMBRANE MODULE 7 from Arabidopsis thaliana (Mouse-ear cress).